Consider the following 203-residue polypeptide: Glutathione S-transferase 2 (203 aa).

The region spanning 1–78 is the GST N-terminal domain; it reads MPKVVFHYFG…YLGRKYGLAG (78 aa). Glutathione-binding positions include Y8, W38, K42, 48-50, and 62-63; these read GQM and QS. The GST C-terminal domain maps to 80 to 203; it reads DIEEDFEIDQ…YLDSAPKKEF (124 aa).

It belongs to the GST superfamily. Sigma family. In terms of assembly, homodimer.

It catalyses the reaction RX + glutathione = an S-substituted glutathione + a halide anion + H(+). Its function is as follows. Conjugation of reduced glutathione to a wide number of exogenous and endogenous hydrophobic electrophiles. This is Glutathione S-transferase 2 (GST2) from Manduca sexta (Tobacco hawkmoth).